An 82-amino-acid chain; its full sequence is Small ribosomal subunit protein uS17 (82 aa).

This sequence belongs to the universal ribosomal protein uS17 family. In terms of assembly, part of the 30S ribosomal subunit.

Its function is as follows. One of the primary rRNA binding proteins, it binds specifically to the 5'-end of 16S ribosomal RNA. In Xanthobacter autotrophicus (strain ATCC BAA-1158 / Py2), this protein is Small ribosomal subunit protein uS17.